Consider the following 150-residue polypeptide: Large ribosomal subunit protein bL9 (150 aa).

It belongs to the bacterial ribosomal protein bL9 family.

Functionally, binds to the 23S rRNA. The polypeptide is Large ribosomal subunit protein bL9 (Halorhodospira halophila (strain DSM 244 / SL1) (Ectothiorhodospira halophila (strain DSM 244 / SL1))).